A 440-amino-acid polypeptide reads, in one-letter code: Putative sodium-coupled neutral amino acid transporter 8 (440 aa).

Transmembrane regions (helical) follow at residues 29–49 (AIFIMLKSALGAGLLNFPWAF), 58–78 (AIMVELVSLIFLISGLVILGY), 100–120 (IGKLCGICYIINLFMICVAFL), 156–176 (FAITVLCLVIILPLSIPKEIS), 183–203 (ILGTLAACYLTVMIIIKYYVM), 223–243 (MFSVVPTICFGFQCHEACVTI), 255–275 (WAAVSVVSMLICLLIYSFTGI), 300–320 (VIIARLLFTISIITIYPIILL), 350–370 (VVITVLWILVTLLIALFVPDI), 373–393 (VISVIGGISAFFIFIFPGLCL), and 418–438 (VVCGAFVFGQSTTIAVMEIIA).

It belongs to the amino acid/polyamine transporter 2 family.

The protein resides in the membrane. Putative sodium-dependent amino acid/proton antiporter. The chain is Putative sodium-coupled neutral amino acid transporter 8 (slc38a8) from Xenopus tropicalis (Western clawed frog).